The primary structure comprises 248 residues: 3-deoxy-manno-octulosonate cytidylyltransferase (248 aa).

Belongs to the KdsB family.

It localises to the cytoplasm. The enzyme catalyses 3-deoxy-alpha-D-manno-oct-2-ulosonate + CTP = CMP-3-deoxy-beta-D-manno-octulosonate + diphosphate. It functions in the pathway nucleotide-sugar biosynthesis; CMP-3-deoxy-D-manno-octulosonate biosynthesis; CMP-3-deoxy-D-manno-octulosonate from 3-deoxy-D-manno-octulosonate and CTP: step 1/1. The protein operates within bacterial outer membrane biogenesis; lipopolysaccharide biosynthesis. Functionally, activates KDO (a required 8-carbon sugar) for incorporation into bacterial lipopolysaccharide in Gram-negative bacteria. The sequence is that of 3-deoxy-manno-octulosonate cytidylyltransferase from Enterobacter sp. (strain 638).